A 310-amino-acid polypeptide reads, in one-letter code: Glutamyl-Q tRNA(Asp) synthetase (310 aa).

Residues 8-12 and glutamate 44 each bind L-glutamate; that span reads RFAPS. The 'HIGH' region signature appears at 11–21; sequence PSPTGPLHLGS. Residues cysteine 100, cysteine 102, tyrosine 123, and cysteine 127 each coordinate Zn(2+). Tyrosine 183 and arginine 201 together coordinate L-glutamate. Residues 239–243 carry the 'KMSKS' region motif; it reads KLSKQ. ATP is bound at residue lysine 242.

The protein belongs to the class-I aminoacyl-tRNA synthetase family. GluQ subfamily. The cofactor is Zn(2+).

Functionally, catalyzes the tRNA-independent activation of glutamate in presence of ATP and the subsequent transfer of glutamate onto a tRNA(Asp). Glutamate is transferred on the 2-amino-5-(4,5-dihydroxy-2-cyclopenten-1-yl) moiety of the queuosine in the wobble position of the QUC anticodon. The protein is Glutamyl-Q tRNA(Asp) synthetase of Cupriavidus metallidurans (strain ATCC 43123 / DSM 2839 / NBRC 102507 / CH34) (Ralstonia metallidurans).